We begin with the raw amino-acid sequence, 683 residues long: MNLCSSGATASTTSLSSTGQAERSGGVPGGGAEGGGGGGGSGNSGGGGKTSDVSAEASTLCFAGGSGTAGAITGTDELSNANSPANGAGGASGSTGSAQQPTGSNGHSHLHNENNANMPPETRPKMVTVKHPESNKPKPTTKKSKPIQADQDVIKALQRCRDEGIKRLDLSKSSITVIPSTVKECVHLTELYLYSNKIGQLPPEIGCLVSLRNLALNENSLTSLPESLQNCSQLKVLDLRHNKLAEIPSVIYRLRSLTTLYLRFNRITAVADDLRQLVNLTMLSLRENKIRELGSAIGALVNLTTLDVSHNHLEHLPEDIGNCVNLSALDLQHNELLDIPDSIGNLKSLVRLGMRYNRLSSVPATLKNCKSMDEFNVEGNGITQLPDGMLASLSGLTTITLSRNQFASYPTGGPAQFTNVYSINLEHNRIDKIPYGIFSRAKGLTKLNMKENMLTALPLDIGTWVNMVELNLATNALQKLPDDIMNLQNLEILILSNNMLKKIPNTIGNLRRLRILDLEENRIEVLPHEIGLLHELQRLILQTNQITMLPRSIGHLGNLTHLSVSENNLQFLPEEIGSLESLENLYINQNPGLEKLPFELALCQNLKYLNIDKCPLSTIPPEIQAGGPSLVLQWLKMHSPYRQIDCYYQYELQTVNQAPGAGGNGGGGAAAAGGSASRSSDRR.

The span at 1-19 shows a compositional bias: low complexity; the sequence is MNLCSSGATASTTSLSSTG. Disordered regions lie at residues 1 to 54 and 74 to 150; these read MNLC…SDVS and GTDE…IQAD. Positions 26 to 49 are enriched in gly residues; the sequence is GVPGGGAEGGGGGGGSGNSGGGGK. The span at 74–86 shows a compositional bias: low complexity; it reads GTDELSNANSPAN. Residues 99 to 117 are compositionally biased toward polar residues; sequence QQPTGSNGHSHLHNENNAN. LRR repeat units lie at residues 164 to 185, 187 to 208, 210 to 231, 233 to 254, 256 to 277, 279 to 300, 302 to 323, 325 to 346, 348 to 370, 371 to 392, 395 to 416, 419 to 440, 443 to 464, 466 to 487, 489 to 510, 512 to 533, 535 to 556, 558 to 579, 581 to 603, and 605 to 626; these read GIKRLDLSKSSITVIPSTVKEC, HLTELYLYSNKIGQLPPEIGCL, SLRNLALNENSLTSLPESLQNC, QLKVLDLRHNKLAEIPSVIYRL, SLTTLYLRFNRITAVADDLRQL, NLTMLSLRENKIRELGSAIGAL, NLTTLDVSHNHLEHLPEDIGNC, NLSALDLQHNELLDIPDSIGNL, SLVRLGMRYNRLSSVPATLKNCK, SMDEFNVEGNGITQLPDGMLAS, GLTTITLSRNQFASYPTGGPAQ, NVYSINLEHNRIDKIPYGIFSR, GLTKLNMKENMLTALPLDIGTW, NMVELNLATNALQKLPDDIMNL, NLEILILSNNMLKKIPNTIGNL, RLRILDLEENRIEVLPHEIGLL, ELQRLILQTNQITMLPRSIGHL, NLTHLSVSENNLQFLPEEIGSL, SLENLYINQNPGLEKLPFELALC, and NLKYLNIDKCPLSTIPPEIQAG. Residues 661-671 show a composition bias toward gly residues; it reads AGGNGGGGAAA. Residues 661-683 are disordered; that stretch reads AGGNGGGGAAAAGGSASRSSDRR. The span at 672–683 shows a compositional bias: low complexity; that stretch reads AGGSASRSSDRR.

It belongs to the SHOC2 family.

Functionally, acts as a Ras effector and participates in MAPK pathway activation. Probably acts as a regulatory subunit of protein phosphatase that specifically dephosphorylates Raf kinase and stimulate Raf activity at specialized signaling complexes upon Ras activation. The chain is Leucine-rich repeat protein soc-2 homolog (Sur-8) from Drosophila sechellia (Fruit fly).